Here is a 115-residue protein sequence, read N- to C-terminus: Large ribosomal subunit protein bL19 (115 aa).

This sequence belongs to the bacterial ribosomal protein bL19 family.

Functionally, this protein is located at the 30S-50S ribosomal subunit interface and may play a role in the structure and function of the aminoacyl-tRNA binding site. The protein is Large ribosomal subunit protein bL19 of Citrobacter koseri (strain ATCC BAA-895 / CDC 4225-83 / SGSC4696).